The chain runs to 329 residues: DNA-directed RNA polymerase subunit alpha (329 aa).

Residues 1–234 (MQGSVTEFLK…EQLDAFVELR (234 aa)) are alpha N-terminal domain (alpha-NTD). The tract at residues 248-329 (FDPILLRPVD…WPPASLIDND (82 aa)) is alpha C-terminal domain (alpha-CTD).

Belongs to the RNA polymerase alpha chain family. In terms of assembly, homodimer. The RNAP catalytic core consists of 2 alpha, 1 beta, 1 beta' and 1 omega subunit. When a sigma factor is associated with the core the holoenzyme is formed, which can initiate transcription.

It catalyses the reaction RNA(n) + a ribonucleoside 5'-triphosphate = RNA(n+1) + diphosphate. Functionally, DNA-dependent RNA polymerase catalyzes the transcription of DNA into RNA using the four ribonucleoside triphosphates as substrates. The sequence is that of DNA-directed RNA polymerase subunit alpha from Idiomarina loihiensis (strain ATCC BAA-735 / DSM 15497 / L2-TR).